Reading from the N-terminus, the 915-residue chain is Protein translocase subunit SecA (915 aa).

ATP is bound by residues Q87, 105-109 (GEGKT), and D512. Over residues 849–864 (AAQQQARQAPLPNAPA) the composition is skewed to low complexity. The segment at 849 to 915 (AAQQQARQAP…CHGSRAKDHA (67 aa)) is disordered. Residues 876–891 (PEEKVARVAAERHIGR) are compositionally biased toward basic and acidic residues. C895, C897, C906, and H907 together coordinate Zn(2+).

It belongs to the SecA family. In terms of assembly, monomer and homodimer. Part of the essential Sec protein translocation apparatus which comprises SecA, SecYEG and auxiliary proteins SecDF-YajC and YidC. The cofactor is Zn(2+).

It localises to the cell inner membrane. It is found in the cytoplasm. The catalysed reaction is ATP + H2O + cellular proteinSide 1 = ADP + phosphate + cellular proteinSide 2.. Functionally, part of the Sec protein translocase complex. Interacts with the SecYEG preprotein conducting channel. Has a central role in coupling the hydrolysis of ATP to the transfer of proteins into and across the cell membrane, serving both as a receptor for the preprotein-SecB complex and as an ATP-driven molecular motor driving the stepwise translocation of polypeptide chains across the membrane. In Actinobacillus succinogenes (strain ATCC 55618 / DSM 22257 / CCUG 43843 / 130Z), this protein is Protein translocase subunit SecA.